Here is a 442-residue protein sequence, read N- to C-terminus: Serine protease AprX (442 aa).

The 318-residue stretch at 122–439 (KALLDTATEA…AGAVNAENSV (318 aa)) folds into the Peptidase S8 domain. Residues aspartate 155 and histidine 187 each act as charge relay system in the active site. Positions 318–337 (DNNTASSDDDTVASFSSRGP) are disordered. Catalysis depends on serine 384, which acts as the Charge relay system. The disordered stretch occupies residues 423–442 (EDPNIYGAGAVNAENSVPGQ).

The protein belongs to the peptidase S8 family.

It localises to the cytoplasm. With respect to regulation, is completely inhibited by phenylmethanesulphonylfluoride (PMSF) in vitro. Functionally, displays serine protease activity. Seems to have a broad substrate specificity. The chain is Serine protease AprX (aprX) from Bacillus subtilis (strain 168).